The chain runs to 539 residues: Diacylglycerol O-acyltransferase 1 (539 aa).

Positions 1–104 (MAISDMPEST…NDGGEKIANG (104 aa)) are disordered. Residues 33–52 (TETTEVSDSNSKTTDPDSGN) are compositionally biased toward polar residues. The span at 56–80 (ESVRVRDSSTDESLARKSCEDDGSR) shows a compositional bias: basic and acidic residues. Transmembrane regions (helical) follow at residues 143–163 (HAGLFNLCIVVLVAVNSRLII), 187–207 (WPLLMCCLTLPIFPAAAFVVE), 219–239 (VVLLLHFIITTAALLYPVFVI), 244–264 (SVVLSGVTLMLFACIVWLKLV), 294–314 (YPYSVSFKSLAYFMVAPTLCY), 334–354 (VKLIIFTGVMGFIIEQYINPI), and 383–403 (VWLCMFYCFFHLWLNILAELL). Positions 410-416 (FYKDWWN) match the FYXDWWN motif motif. 3 helical membrane passes run 451-471 (GVAILIAFFVSAIFHELCIAV), 473-493 (CHIFKLWAFIGIMCQVPLVLI), and 506-526 (VGNMIFWFFFCILGQPMCVLL). H465 is a catalytic residue.

It belongs to the membrane-bound acyltransferase family. Sterol o-acyltransferase subfamily.

It is found in the endoplasmic reticulum membrane. The enzyme catalyses an acyl-CoA + a 1,2-diacyl-sn-glycerol = a triacyl-sn-glycerol + CoA. It participates in glycerolipid metabolism; triacylglycerol biosynthesis. Its function is as follows. Major contributor to triacylglycerol (TAG) synthesis and oil accumulation in developing seeds. Catalyzes the acylation of the sn-3 hydroxy group of sn-1,2-diacylglycerol using acyl-CoA. Has a marked preference for oleoyl-CoA as substrate. This is Diacylglycerol O-acyltransferase 1 from Corylus americana (American hazelnut).